An 83-amino-acid chain; its full sequence is Beta-toxin Ct7 (83 aa).

Residues Met1–Cys18 form the signal peptide. The 63-residue stretch at Lys19–Gly81 folds into the LCN-type CS-alpha/beta domain. Intrachain disulfides connect Cys29–Cys80, Cys33–Cys54, Cys40–Cys61, and Cys44–Cys63. The residue at position 81 (Gly81) is a Glycine amide. A propeptide is located at residue Gly82.

It belongs to the long (4 C-C) scorpion toxin superfamily. Sodium channel inhibitor family. Beta subfamily. As to expression, expressed by the venom gland.

The protein localises to the secreted. Functionally, beta toxins bind voltage-independently at site-4 of sodium channels (Nav) and shift the voltage of activation toward more negative potentials thereby affecting sodium channel activation and promoting spontaneous and repetitive firing. Is possibly toxic to mice, freshwater shrimp and crickets. The protein is Beta-toxin Ct7 of Centruroides tecomanus (Scorpion).